Here is a 417-residue protein sequence, read N- to C-terminus: UDP-N-acetylglucosamine 1-carboxyvinyltransferase (417 aa).

22–23 (KN) is a binding site for phosphoenolpyruvate. R93 contributes to the UDP-N-acetyl-alpha-D-glucosamine binding site. C117 (proton donor) is an active-site residue. Position 117 is a 2-(S-cysteinyl)pyruvic acid O-phosphothioketal (C117). Residues 122–126 (RPVDQ), D304, and I326 each bind UDP-N-acetyl-alpha-D-glucosamine.

It belongs to the EPSP synthase family. MurA subfamily.

It localises to the cytoplasm. It catalyses the reaction phosphoenolpyruvate + UDP-N-acetyl-alpha-D-glucosamine = UDP-N-acetyl-3-O-(1-carboxyvinyl)-alpha-D-glucosamine + phosphate. The protein operates within cell wall biogenesis; peptidoglycan biosynthesis. Its function is as follows. Cell wall formation. Adds enolpyruvyl to UDP-N-acetylglucosamine. The polypeptide is UDP-N-acetylglucosamine 1-carboxyvinyltransferase (Laribacter hongkongensis (strain HLHK9)).